The primary structure comprises 146 residues: Large ribosomal subunit protein uL23m (146 aa).

Residues 108–138 (PDLFPEKDPRSPEPLEEELPQQRQSSDLRCP) are disordered. Over residues 111 to 120 (FPEKDPRSPE) the composition is skewed to basic and acidic residues.

This sequence belongs to the universal ribosomal protein uL23 family. In terms of assembly, component of the mitochondrial ribosome large subunit (39S) which comprises a 16S rRNA and about 50 distinct proteins.

It localises to the mitochondrion. The protein is Large ribosomal subunit protein uL23m (Mrpl23) of Mus musculus (Mouse).